A 298-amino-acid polypeptide reads, in one-letter code: GTPase Era (298 aa).

In terms of domain architecture, Era-type G spans 8 to 176 (HCGSVAVIGR…VRDVLALLPE (169 aa)). The segment at 16 to 23 (GRPNVGKS) is G1. 16–23 (GRPNVGKS) contributes to the GTP binding site. The interval 42–46 (QTTRH) is G2. The G3 stretch occupies residues 63-66 (DTPG). GTP-binding positions include 63 to 67 (DTPGL) and 125 to 128 (NKID). Residues 125–128 (NKID) are G4. The G5 stretch occupies residues 155-157 (ISA). Residues 199–283 (VREQLMRQLG…FLETWVRVRE (85 aa)) form the KH type-2 domain.

The protein belongs to the TRAFAC class TrmE-Era-EngA-EngB-Septin-like GTPase superfamily. Era GTPase family. As to quaternary structure, monomer.

It is found in the cytoplasm. The protein localises to the cell inner membrane. Functionally, an essential GTPase that binds both GDP and GTP, with rapid nucleotide exchange. Plays a role in 16S rRNA processing and 30S ribosomal subunit biogenesis and possibly also in cell cycle regulation and energy metabolism. This Stenotrophomonas maltophilia (strain R551-3) protein is GTPase Era.